The following is a 577-amino-acid chain: Aspartate--tRNA(Asp/Asn) ligase (577 aa).

L-aspartate is bound at residue Glu171. The interval 195–198 (QLFK) is aspartate. Arg217 is an L-aspartate binding site. Residues 217-219 (RDE) and Gln226 contribute to the ATP site. His444 is an L-aspartate binding site. Residue Glu474 coordinates ATP. Arg481 serves as a coordination point for L-aspartate. 526 to 529 (GFDR) is an ATP binding site.

Belongs to the class-II aminoacyl-tRNA synthetase family. Type 1 subfamily. As to quaternary structure, homodimer.

The protein localises to the cytoplasm. It catalyses the reaction tRNA(Asx) + L-aspartate + ATP = L-aspartyl-tRNA(Asx) + AMP + diphosphate. In terms of biological role, aspartyl-tRNA synthetase with relaxed tRNA specificity since it is able to aspartylate not only its cognate tRNA(Asp) but also tRNA(Asn). Reaction proceeds in two steps: L-aspartate is first activated by ATP to form Asp-AMP and then transferred to the acceptor end of tRNA(Asp/Asn). In Helicobacter pylori (strain HPAG1), this protein is Aspartate--tRNA(Asp/Asn) ligase.